A 436-amino-acid chain; its full sequence is D-amino acid dehydrogenase (436 aa).

3–17 contributes to the FAD binding site; sequence IVVLGAGVVGVTSAY.

It belongs to the DadA oxidoreductase family. FAD is required as a cofactor.

It carries out the reaction a D-alpha-amino acid + A + H2O = a 2-oxocarboxylate + AH2 + NH4(+). Its pathway is amino-acid degradation; D-alanine degradation; NH(3) and pyruvate from D-alanine: step 1/1. Functionally, oxidative deamination of D-amino acids. In Cereibacter sphaeroides (strain ATCC 17023 / DSM 158 / JCM 6121 / CCUG 31486 / LMG 2827 / NBRC 12203 / NCIMB 8253 / ATH 2.4.1.) (Rhodobacter sphaeroides), this protein is D-amino acid dehydrogenase.